A 119-amino-acid chain; its full sequence is Hydrogenase maturation factor HypA (119 aa).

His2 provides a ligand contact to Ni(2+). Cys73, Cys76, Cys89, and Cys92 together coordinate Zn(2+).

The protein belongs to the HypA/HybF family.

Its function is as follows. Involved in the maturation of [NiFe] hydrogenases. Required for nickel insertion into the metal center of the hydrogenase. In Cupriavidus necator (strain ATCC 17699 / DSM 428 / KCTC 22496 / NCIMB 10442 / H16 / Stanier 337) (Ralstonia eutropha), this protein is Hydrogenase maturation factor HypA.